Here is a 119-residue protein sequence, read N- to C-terminus: Protein SPIRAL1 (119 aa).

A compositionally biased stretch (gly residues) spans 1 to 11; that stretch reads MGRGNSCGGGQ. Disordered stretches follow at residues 1–47 and 85–105; these read MGRG…PPVT and EGQN…HAAP. A compositionally biased stretch (pro residues) spans 24–34; sequence APKPVPAPRPA.

This sequence belongs to the SPIRAL1 family. Ubiquitinated. Upon salt-stress induction, it is subject to proteasome-dependent degradation. Ubiquitous. High expression was associated with tissues undergoing rapid cell expansion, including the root elongation zone, hypocotyls of dark grown-seedlings, and cotyledons of light-grown seedlings.

Its subcellular location is the cytoplasm. The protein resides in the cytoskeleton. It is found in the phragmoplast. It localises to the spindle. Required for directional control of cell elongation. Stabilizes growing ends of cortical microtubules and influences their dynamic properties. Acts redundantly with SP1Ls in maintaining the cortical microtubules organization essential for anisotropic cell growth. Plays a key role in salt stress-induced microtubules disassembly. This Arabidopsis thaliana (Mouse-ear cress) protein is Protein SPIRAL1 (SPR1).